Reading from the N-terminus, the 331-residue chain is 3-dehydroquinate synthase homolog (331 aa).

This sequence belongs to the archaeal-type DHQ synthase family.

The chain is 3-dehydroquinate synthase homolog from Persephonella marina (strain DSM 14350 / EX-H1).